Here is a 375-residue protein sequence, read N- to C-terminus: Probable disease resistance protein At1g52660 (375 aa).

The region spanning 158–372 (ENTGIIGLYG…LSNSPPNFSG (215 aa)) is the NB-ARC domain. 167-174 (GVEGVGKT) serves as a coordination point for ATP.

Its function is as follows. Possible disease resistance protein. The polypeptide is Probable disease resistance protein At1g52660 (Arabidopsis thaliana (Mouse-ear cress)).